The primary structure comprises 650 residues: Threonine--tRNA ligase (650 aa).

One can recognise a TGS domain in the interval 1–66; that stretch reads MVQITLPDGS…EHDAQLAIVT (66 aa). The interval 247-538 is catalytic; sequence DHRKIGRDLD…LIENHAGAMP (292 aa). Zn(2+) contacts are provided by Cys338, His389, and His515.

It belongs to the class-II aminoacyl-tRNA synthetase family. As to quaternary structure, homodimer. Zn(2+) is required as a cofactor.

It is found in the cytoplasm. The catalysed reaction is tRNA(Thr) + L-threonine + ATP = L-threonyl-tRNA(Thr) + AMP + diphosphate + H(+). In terms of biological role, catalyzes the attachment of threonine to tRNA(Thr) in a two-step reaction: L-threonine is first activated by ATP to form Thr-AMP and then transferred to the acceptor end of tRNA(Thr). Also edits incorrectly charged L-seryl-tRNA(Thr). This chain is Threonine--tRNA ligase, found in Bordetella petrii (strain ATCC BAA-461 / DSM 12804 / CCUG 43448).